Consider the following 87-residue polypeptide: HssA/B-like protein 18 (87 aa).

It belongs to the hssA/B family.

In Dictyostelium discoideum (Social amoeba), this protein is HssA/B-like protein 18 (hssl18).